The chain runs to 480 residues: UDP-N-acetylmuramate--L-alanine ligase (480 aa).

Residue 115-121 (GTHGKTT) participates in ATP binding.

This sequence belongs to the MurCDEF family.

Its subcellular location is the cytoplasm. The catalysed reaction is UDP-N-acetyl-alpha-D-muramate + L-alanine + ATP = UDP-N-acetyl-alpha-D-muramoyl-L-alanine + ADP + phosphate + H(+). The protein operates within cell wall biogenesis; peptidoglycan biosynthesis. Cell wall formation. This chain is UDP-N-acetylmuramate--L-alanine ligase, found in Gluconacetobacter diazotrophicus (strain ATCC 49037 / DSM 5601 / CCUG 37298 / CIP 103539 / LMG 7603 / PAl5).